Here is a 103-residue protein sequence, read N- to C-terminus: Defensin-like protein 290 (103 aa).

A signal peptide spans 1-29 (MTALRRTISIIFVFYLSCTLFVNIFGVQA). 6 disulfides stabilise this stretch: Cys33/Cys50, Cys39/Cys55, Cys43/Cys57, Cys72/Cys92, Cys78/Cys98, and Cys84/Cys100.

This sequence belongs to the DEFL family.

It is found in the secreted. The sequence is that of Defensin-like protein 290 from Arabidopsis thaliana (Mouse-ear cress).